The sequence spans 650 residues: Serine/threonine-protein kinase oca2 (650 aa).

The segment covering M1–G14 has biased composition (polar residues). 2 disordered regions span residues M1–I210 and H222–A288. At S72 the chain carries Phosphoserine. Over residues N78 to E98 the composition is skewed to basic and acidic residues. The segment covering P140–N154 has biased composition (polar residues). Composition is skewed to basic residues over residues H222–H231 and H245–H257. Residues H258 to P279 are compositionally biased toward basic and acidic residues. Residue S286 is modified to Phosphoserine. Positions G302–I614 constitute a Protein kinase domain. ATP is bound by residues L308–V316 and K331. D425 (proton acceptor) is an active-site residue. The tract at residues P549–K570 is disordered.

It belongs to the protein kinase superfamily. Ser/Thr protein kinase family.

Its subcellular location is the cytoplasm. The enzyme catalyses L-seryl-[protein] + ATP = O-phospho-L-seryl-[protein] + ADP + H(+). The catalysed reaction is L-threonyl-[protein] + ATP = O-phospho-L-threonyl-[protein] + ADP + H(+). Its function is as follows. Overexpression causes cell cycle arrest. In Schizosaccharomyces pombe (strain 972 / ATCC 24843) (Fission yeast), this protein is Serine/threonine-protein kinase oca2.